The chain runs to 389 residues: S-adenosylmethionine synthase (389 aa).

H17 contacts ATP. D19 contacts Mg(2+). E45 is a binding site for K(+). L-methionine-binding residues include E58 and Q101. Residues 101–111 (QSPDISQGVDG) form a flexible loop region. Residues 170–172 (DSK), 237–238 (RF), D246, 252–253 (RK), A269, and K273 contribute to the ATP site. L-methionine is bound at residue D246. Position 277 (K277) interacts with L-methionine.

Belongs to the AdoMet synthase family. As to quaternary structure, homotetramer; dimer of dimers. Mg(2+) is required as a cofactor. K(+) serves as cofactor.

Its subcellular location is the cytoplasm. It catalyses the reaction L-methionine + ATP + H2O = S-adenosyl-L-methionine + phosphate + diphosphate. It participates in amino-acid biosynthesis; S-adenosyl-L-methionine biosynthesis; S-adenosyl-L-methionine from L-methionine: step 1/1. In terms of biological role, catalyzes the formation of S-adenosylmethionine (AdoMet) from methionine and ATP. The overall synthetic reaction is composed of two sequential steps, AdoMet formation and the subsequent tripolyphosphate hydrolysis which occurs prior to release of AdoMet from the enzyme. In Treponema denticola (strain ATCC 35405 / DSM 14222 / CIP 103919 / JCM 8153 / KCTC 15104), this protein is S-adenosylmethionine synthase.